The following is a 429-amino-acid chain: MGKNVVVLGSQWGDEGKGKIVDLLTEKASAVARFQGGHNAGHTLVVDGKTTVLHLIPSGILREGVTCFIGNGVVLAPDALLKEMKGLEENGVPVRERLRISPNCPLIMPYHVALDQAREAKRGSGKIGTTGRGIGPAYEDKVARRAIKLADLFRDDLEEKLRNLIEYHNFQLTQYYKVEAIDFDETLKLCKEWKEEIRGMVTDVTEDLNQLRLAGKNLMFEGAQGTLLDIDHGTYPFVTSSSVTAGGVSTGTGIGPLYLDYVLGITKAYTTRVGSGPFPTELFDDVGAHLAKVGHEFGATTGRARRCGWFDAEALRRAVVLNSMSGICLTKLDVLDGLEELLIGVGYNLPETECAGAHDAEFYEAVTPKYETLQGWSESTVGITNYDELPENAKIYIKRIEALIGCPVDIISTGPDREETIVLRDPYDA.

GTP contacts are provided by residues 13-19 and 41-43; these read GDEGKGK and GHT. Catalysis depends on aspartate 14, which acts as the Proton acceptor. Mg(2+)-binding residues include aspartate 14 and glycine 41. Residues 14–17, 39–42, threonine 130, arginine 144, glutamine 224, threonine 239, and arginine 303 each bind IMP; these read DEGK and NAGH. Histidine 42 serves as the catalytic Proton donor. 299–305 is a binding site for substrate; the sequence is ATTGRAR. GTP contacts are provided by residues arginine 305, 331-333, and 412-414; these read KLD and STG.

The protein belongs to the adenylosuccinate synthetase family. As to quaternary structure, homodimer. Mg(2+) serves as cofactor.

It is found in the cytoplasm. The catalysed reaction is IMP + L-aspartate + GTP = N(6)-(1,2-dicarboxyethyl)-AMP + GDP + phosphate + 2 H(+). The protein operates within purine metabolism; AMP biosynthesis via de novo pathway; AMP from IMP: step 1/2. Its function is as follows. Plays an important role in the de novo pathway of purine nucleotide biosynthesis. Catalyzes the first committed step in the biosynthesis of AMP from IMP. This chain is Adenylosuccinate synthetase, found in Psychrobacter cryohalolentis (strain ATCC BAA-1226 / DSM 17306 / VKM B-2378 / K5).